Reading from the N-terminus, the 325-residue chain is Large ribosomal subunit protein uL18 (325 aa).

Positions 247-300 are disordered; sequence IRIPPSRRNPRRRSPRSGGRWPSCRSPPARRRSRSTRPTSWPRSRPTSKPKRPR. 2 stretches are compositionally biased toward low complexity: residues 262–273 and 282–291; these read RSGGRWPSCRSP and TRPTSWPRSR.

Belongs to the universal ribosomal protein uL18 family. In terms of assembly, component of the large ribosomal subunit (LSU).

The protein localises to the cytoplasm. It is found in the nucleus. Functionally, component of the ribosome, a large ribonucleoprotein complex responsible for the synthesis of proteins in the cell. The small ribosomal subunit (SSU) binds messenger RNAs (mRNAs) and translates the encoded message by selecting cognate aminoacyl-transfer RNA (tRNA) molecules. The large subunit (LSU) contains the ribosomal catalytic site termed the peptidyl transferase center (PTC), which catalyzes the formation of peptide bonds, thereby polymerizing the amino acids delivered by tRNAs into a polypeptide chain. The nascent polypeptides leave the ribosome through a tunnel in the LSU and interact with protein factors that function in enzymatic processing, targeting, and the membrane insertion of nascent chains at the exit of the ribosomal tunnel. The protein is Large ribosomal subunit protein uL18 (RpL5) of Anopheles gambiae (African malaria mosquito).